Here is a 1708-residue protein sequence, read N- to C-terminus: Clathrin heavy chain 2 (1708 aa).

The segment at methionine 1–tyrosine 492 is globular terminal domain. 7 WD40-like repeat regions span residues phenylalanine 25–threonine 67, alanine 68–glutamine 113, valine 114–alanine 155, asparagine 156–glutamate 205, alanine 206–glutamine 270, aspartate 271–aspartate 314, and proline 315–asparagine 343. The segment at glutamate 462 to aspartate 478 is binding site for the uncoating ATPase, involved in lattice disassembly. The tract at residues isoleucine 493–arginine 536 is flexible linker. Residues threonine 537 to proline 648 form a distal segment region. Residues threonine 537 to tyrosine 1708 are heavy chain arm. 7 CHCR repeats span residues glutamine 551–valine 697, alanine 700–phenylalanine 842, isoleucine 847–aspartate 986, leucine 993–alanine 1138, phenylalanine 1142–alanine 1283, leucine 1288–asparagine 1434, and leucine 1437–phenylalanine 1580. The interval valine 653–tyrosine 1708 is proximal segment. The involved in binding clathrin light chain stretch occupies residues alanine 1227 to lysine 1536. The tract at residues serine 1564 to tyrosine 1708 is trimerization.

This sequence belongs to the clathrin heavy chain family. As to quaternary structure, clathrin triskelions, composed of 3 heavy chains and 3 light chains, are the basic subunits of the clathrin coat.

It is found in the cytoplasmic vesicle membrane. The protein resides in the membrane. It localises to the coated pit. In terms of biological role, clathrin is the major protein of the polyhedral coat of coated pits and vesicles. The sequence is that of Clathrin heavy chain 2 from Oryza sativa subsp. japonica (Rice).